A 343-amino-acid polypeptide reads, in one-letter code: Heat-inducible transcription repressor HrcA (343 aa).

The protein belongs to the HrcA family.

Functionally, negative regulator of class I heat shock genes (grpE-dnaK-dnaJ and groELS operons). Prevents heat-shock induction of these operons. The polypeptide is Heat-inducible transcription repressor HrcA (Mycolicibacterium gilvum (strain PYR-GCK) (Mycobacterium gilvum (strain PYR-GCK))).